Here is a 137-residue protein sequence, read N- to C-terminus: Fatty acid-binding protein homolog 8 (137 aa).

A Nuclear localization signal motif is present at residues 24–34; that stretch reads KEIGVGLLIRK.

Belongs to the calycin superfamily. Fatty-acid binding protein (FABP) family. Monomer. As to expression, intestine.

The protein localises to the lysosome. The protein resides in the nucleus. Functionally, lysosomal lipid chaperone which binds to a wide range of unsaturated fatty acids, including high affinity binding to oleic acid and oleoylethanolamide, to transport them into the nucleus. As part of a lysosome-to-nucleus retrograde lipid signaling pathway, translocates into the nucleus where it activates the transcription of genes promoting longevity and activation of mitochondrial beta oxidation. The polypeptide is Fatty acid-binding protein homolog 8 (Caenorhabditis elegans).